Reading from the N-terminus, the 593-residue chain is Glutamate decarboxylase 1 (593 aa).

Low complexity predominate over residues 1 to 12; the sequence is MASSTPSPATSS. The tract at residues 1-22 is disordered; it reads MASSTPSPATSSNAGADPNTTN. Ser77 bears the Phosphoserine mark. 189–191 provides a ligand contact to 4-aminobutanoate; sequence QLS. Lys404 carries the post-translational modification N6-(pyridoxal phosphate)lysine. 4-aminobutanoate is bound at residue Arg566.

This sequence belongs to the group II decarboxylase family. Homodimer. It depends on pyridoxal 5'-phosphate as a cofactor.

The enzyme catalyses L-glutamate + H(+) = 4-aminobutanoate + CO2. Functionally, catalyzes the synthesis of the inhibitory neurotransmitter gamma-aminobutyric acid (GABA) with pyridoxal 5'-phosphate as cofactor. The polypeptide is Glutamate decarboxylase 1 (Gad1) (Mus musculus (Mouse)).